We begin with the raw amino-acid sequence, 367 residues long: Pectate trisaccharide-lyase (367 aa).

A signal peptide spans 1–27 (MLMRFSRVVSLVLLLVFTAVLTGAVKA). Ca(2+) contacts are provided by aspartate 144, aspartate 166, and aspartate 170. One copy of the PbH1 1 repeat lies at 151-173 (SHHIWIDHCTFVNGNDGAVDIKK). Residue arginine 224 is part of the active site. Residues 263–289 (GAKVHVEGNYFMGYGAVMAEAGIAFLP) form a PbH1 2 repeat.

It belongs to the polysaccharide lyase 1 family. Homotetramer. Requires Ca(2+) as cofactor.

The protein resides in the secreted. The enzyme catalyses eliminative cleavage of unsaturated trigalacturonate as the major product from the reducing end of polygalacturonic acid/pectate.. Completely inactivated by EGTA. Functionally, cleaves unsaturated trigalacturonate from pectin. Activity is highest towards polygalacturonic acid, activity on methylated pectins decreases with an increasing degree of methylation. This Thermotoga maritima (strain ATCC 43589 / DSM 3109 / JCM 10099 / NBRC 100826 / MSB8) protein is Pectate trisaccharide-lyase.